Here is a 657-residue protein sequence, read N- to C-terminus: Probable potassium transport system protein Kup (657 aa).

12 consecutive transmembrane segments (helical) span residues 14–34, 47–67, 96–116, 140–160, 166–186, 201–221, 242–262, 283–303, 340–360, 371–391, 396–416, and 425–445; these read IGGL…SPLY, ADIV…QTTI, IQWL…DGII, TIVY…QFGT, FFAP…FIQI, AYHL…VFLC, ISWI…AAYL, LIMP…AAVI, LYIP…VLHF, GLAI…YLIM, LYFM…FLIA, and GYVT…WYLA.

It belongs to the HAK/KUP transporter (TC 2.A.72) family.

Its subcellular location is the cell inner membrane. It carries out the reaction K(+)(in) + H(+)(in) = K(+)(out) + H(+)(out). In terms of biological role, transport of potassium into the cell. Likely operates as a K(+):H(+) symporter. The sequence is that of Probable potassium transport system protein Kup from Flavobacterium johnsoniae (strain ATCC 17061 / DSM 2064 / JCM 8514 / BCRC 14874 / CCUG 350202 / NBRC 14942 / NCIMB 11054 / UW101) (Cytophaga johnsonae).